The chain runs to 355 residues: uncharacterized protein (355 aa).

This is an uncharacterized protein from Aquifex aeolicus (strain VF5).